Here is a 221-residue protein sequence, read N- to C-terminus: Endonuclease V (221 aa).

Positions 44 and 112 each coordinate Mg(2+).

The protein belongs to the endonuclease V family. Mg(2+) serves as cofactor.

The protein localises to the cytoplasm. It carries out the reaction Endonucleolytic cleavage at apurinic or apyrimidinic sites to products with a 5'-phosphate.. Its function is as follows. DNA repair enzyme involved in the repair of deaminated bases. Selectively cleaves double-stranded DNA at the second phosphodiester bond 3' to a deoxyinosine leaving behind the intact lesion on the nicked DNA. In Nostoc punctiforme (strain ATCC 29133 / PCC 73102), this protein is Endonuclease V.